The primary structure comprises 480 residues: Glycogen synthase 1 (480 aa).

Lys-15 provides a ligand contact to ADP-alpha-D-glucose.

The protein belongs to the glycosyltransferase 1 family. Bacterial/plant glycogen synthase subfamily.

It catalyses the reaction [(1-&gt;4)-alpha-D-glucosyl](n) + ADP-alpha-D-glucose = [(1-&gt;4)-alpha-D-glucosyl](n+1) + ADP + H(+). Its pathway is glycan biosynthesis; glycogen biosynthesis. Its function is as follows. Synthesizes alpha-1,4-glucan chains using ADP-glucose. The chain is Glycogen synthase 1 (glgA1) from Rhizobium meliloti (strain 1021) (Ensifer meliloti).